The primary structure comprises 9439 residues: Extracellular matrix-binding protein ebh (9439 aa).

29 consecutive FIVAR domains span residues 1815-1871 (ARRR…VNSA), 1901-1957 (AKEQ…INDA), 1985-2041 (AYDT…VRDA), 2071-2127 (AKKR…ITSE), 2155-2211 (AYNK…VTQA), 2241-2297 (AKNR…ISSE), 2325-2381 (AYNK…VEDA), 2411-2467 (AKEK…ITEN), 2488-2551 (DTTS…VNNA), 2581-2638 (ARNR…STEI), 2665-2720 (AKNQ…IRTN), 2748-2804 (AKTA…VSDE), 2832-2888 (AYNQ…VNNA), 2918-2974 (AKEQ…ISNA), 3002-3058 (AYNQ…VTAA), 3088-3144 (AKQQ…ITNE), 3172-3228 (AYNQ…VAQA), 3258-3314 (AKNQ…ISDE), 3335-3398 (DTTE…VNNA), 3428-3484 (ARLN…ITTE), 3512-3567 (AKTA…IKTN), 3595-3650 (IKRQ…VKES), 3678-3733 (AKNR…IRQN), 3802-3860 (SMTA…IDQK), 3928-3983 (AMTQ…LDPA), 4056-4114 (AMQA…VNQK), 4182-4240 (SMGT…VDNA), 4308-4365 (AMHT…INQK), and 4433-4491 (VMEQ…IEQA). The segment covering 2495-2507 (EVRKLSRRGDTNN) has biased composition (basic and acidic residues). The segment at 2495–2514 (EVRKLSRRGDTNNKKPSSVS) is disordered. Over residues 2925–2938 (AVDQVPSTEGMTQQ) the composition is skewed to polar residues. Positions 2925-2951 (AVDQVPSTEGMTQQTKDDYNSKQQAAQ) are disordered. The disordered stretch occupies residues 4522 to 4542 (LSGLTNEQKPKENQAVNGAQT). The FIVAR 30 domain occupies 4559–4617 (SMQTLRDLVNNQNAIHSTSNYFNEDSTQKNTYDNAIDNGSTYITGQHNPELNKSTIDQT). The tract at residues 4648–4671 (LGYLNDPQKSGEESLVNGSNTRSE) is disordered. FIVAR domains lie at 4685-4743 (AMKQ…IEQK), 4811-4869 (AMQA…IEQA), 4937-4995 (AMSN…IEQA), 5063-5115 (AMEA…VLDK), 5189-5246 (AMLG…INQL), 5314-5372 (LMGA…VTTA), 5440-5498 (AMGE…IDQA), 5566-5624 (AMKK…ITNA), 5692-5750 (AMKQ…IADT), 5818-5875 (DMST…LQDL), 5943-6000 (AMKA…IKQA), 6068-6126 (KMEE…INRT), 6194-6252 (AMQQ…IQAI), and 6320-6378 (EMGT…IADA). Polar residues predominate over residues 5699-5712 (QVNQDDQISNSSPF). Residues 5699–5719 (QVNQDDQISNSSPFINEDSDK) are disordered. Residues 6413–6434 (NNSQRQSEHDEINSAPSRTEVS) form a disordered region. 18 FIVAR domains span residues 6446-6504 (AMRQ…IEDA), 6572-6630 (AMKA…INRA), 6698-6755 (SMNQ…IDQA), 6823-6877 (TMKA…ANDE), 6949-7007 (AMKK…INTI), 7075-7133 (SMNT…VERA), 7201-7259 (DMKK…IENA), 7327-7384 (AMKH…IKQL), 7452-7510 (AMEN…IEHA), 7578-7636 (AMKA…INSI), 7704-7762 (AMET…VDIV), 7830-7888 (AMKS…VRQA), 7956-8010 (VMGK…TKQA), 8078-8137 (IMGE…IDTF), 8205-8264 (AMKS…IQGL), 8332-8391 (AMKD…VLGL), 8459-8518 (KMKL…IQHL), and 8587-8643 (AMQG…ANII). A helical membrane pass occupies residues 9306-9324 (TVGVITLTGLLSSFWLVLA). 3 stretches are compositionally biased toward basic and acidic residues: residues 9363-9375 (DKEEQIQNDDKHS), 9386-9395 (EKQLSEEDIH), and 9404-9413 (QNSDNKDTKQ). The tract at residues 9363-9439 (DKEEQIQNDD…VVKTKKRSKK (77 aa)) is disordered. Over residues 9414–9439 (KKVTSKKKKTPQSTKKVVKTKKRSKK) the composition is skewed to basic residues.

It localises to the cell membrane. This Staphylococcus epidermidis (strain ATCC 35984 / DSM 28319 / BCRC 17069 / CCUG 31568 / BM 3577 / RP62A) protein is Extracellular matrix-binding protein ebh (ebh).